A 190-amino-acid polypeptide reads, in one-letter code: Threonylcarbamoyl-AMP synthase (190 aa).

Positions T7–G190 constitute a YrdC-like domain.

This sequence belongs to the SUA5 family. TsaC subfamily.

The protein resides in the cytoplasm. The enzyme catalyses L-threonine + hydrogencarbonate + ATP = L-threonylcarbamoyladenylate + diphosphate + H2O. Functionally, required for the formation of a threonylcarbamoyl group on adenosine at position 37 (t(6)A37) in tRNAs that read codons beginning with adenine. Catalyzes the conversion of L-threonine, HCO(3)(-)/CO(2) and ATP to give threonylcarbamoyl-AMP (TC-AMP) as the acyladenylate intermediate, with the release of diphosphate. This Salmonella typhi protein is Threonylcarbamoyl-AMP synthase.